A 111-amino-acid polypeptide reads, in one-letter code: Cytochrome b-c1 complex subunit 7 (111 aa).

N-acetylalanine is present on Ala2. Lys12 bears the N6-acetyllysine; alternate mark. Lys12 carries the N6-succinyllysine; alternate modification. Lys19 is modified (N6-acetyllysine). Lys78 carries the N6-acetyllysine; alternate modification. An N6-succinyllysine; alternate modification is found at Lys78. N6-acetyllysine occurs at positions 83 and 96.

This sequence belongs to the UQCRB/QCR7 family. In terms of assembly, component of the ubiquinol-cytochrome c oxidoreductase (cytochrome b-c1 complex, complex III, CIII), a multisubunit enzyme composed of 11 subunits. The complex is composed of 3 respiratory subunits cytochrome b, cytochrome c1 and Rieske protein UQCRFS1, 2 core protein subunits UQCRC1/QCR1 and UQCRC2/QCR2, and 6 low-molecular weight protein subunits UQCRH/QCR6, UQCRB/QCR7, UQCRQ/QCR8, UQCR10/QCR9, UQCR11/QCR10 and subunit 9, the cleavage product of Rieske protein UQCRFS1. The complex exists as an obligatory dimer and forms supercomplexes (SCs) in the inner mitochondrial membrane with NADH-ubiquinone oxidoreductase (complex I, CI) and cytochrome c oxidase (complex IV, CIV), resulting in different assemblies (supercomplex SCI(1)III(2)IV(1) and megacomplex MCI(2)III(2)IV(2)).

The protein resides in the mitochondrion inner membrane. Functionally, component of the ubiquinol-cytochrome c oxidoreductase, a multisubunit transmembrane complex that is part of the mitochondrial electron transport chain which drives oxidative phosphorylation. The respiratory chain contains 3 multisubunit complexes succinate dehydrogenase (complex II, CII), ubiquinol-cytochrome c oxidoreductase (cytochrome b-c1 complex, complex III, CIII) and cytochrome c oxidase (complex IV, CIV), that cooperate to transfer electrons derived from NADH and succinate to molecular oxygen, creating an electrochemical gradient over the inner membrane that drives transmembrane transport and the ATP synthase. The cytochrome b-c1 complex catalyzes electron transfer from ubiquinol to cytochrome c, linking this redox reaction to translocation of protons across the mitochondrial inner membrane, with protons being carried across the membrane as hydrogens on the quinol. In the process called Q cycle, 2 protons are consumed from the matrix, 4 protons are released into the intermembrane space and 2 electrons are passed to cytochrome c. The sequence is that of Cytochrome b-c1 complex subunit 7 (UQCRB) from Homo sapiens (Human).